The sequence spans 151 residues: U1 small nuclear ribonucleoprotein C (151 aa).

The Matrin-type zinc finger occupies 4–36 (YYCDYCDTYLTHDSPSVRKTHCTGRKHKDNVKF).

The protein belongs to the U1 small nuclear ribonucleoprotein C family. U1 snRNP is composed of the 7 core Sm proteins B/B', D1, D2, D3, E, F and G that assemble in a heptameric protein ring on the Sm site of the small nuclear RNA to form the core snRNP, and at least 3 U1 snRNP-specific proteins U1-70K, U1-A and U1-C. U1-C interacts with U1 snRNA and the 5' splice-site region of the pre-mRNA.

It is found in the nucleus. Its function is as follows. Component of the spliceosomal U1 snRNP, which is essential for recognition of the pre-mRNA 5' splice-site and the subsequent assembly of the spliceosome. U1-C is directly involved in initial 5' splice-site recognition for both constitutive and regulated alternative splicing. The interaction with the 5' splice-site seems to precede base-pairing between the pre-mRNA and the U1 snRNA. Stimulates commitment or early (E) complex formation by stabilizing the base pairing of the 5' end of the U1 snRNA and the 5' splice-site region. This is U1 small nuclear ribonucleoprotein C from Anopheles darlingi (Mosquito).